We begin with the raw amino-acid sequence, 79 residues long: Small ribosomal subunit protein bS18 (79 aa).

This sequence belongs to the bacterial ribosomal protein bS18 family. As to quaternary structure, part of the 30S ribosomal subunit. Forms a tight heterodimer with protein bS6.

Binds as a heterodimer with protein bS6 to the central domain of the 16S rRNA, where it helps stabilize the platform of the 30S subunit. This chain is Small ribosomal subunit protein bS18, found in Rhodopseudomonas palustris (strain HaA2).